A 333-amino-acid polypeptide reads, in one-letter code: Ketol-acid reductoisomerase (NADP(+)) (333 aa).

Positions 1–179 (MFYDDNADLS…GGTRAGVIKT (179 aa)) constitute a KARI N-terminal Rossmann domain. Residues 22–25 (YGSQ), serine 48, serine 50, and 80–83 (DTAQ) contribute to the NADP(+) site. Residue histidine 105 is part of the active site. Glycine 131 provides a ligand contact to NADP(+). Positions 180-325 (TFKDETETDL…KKLRDLMSWV (146 aa)) constitute a KARI C-terminal knotted domain. Positions 188, 192, 224, and 228 each coordinate Mg(2+). Substrate is bound at residue serine 249.

It belongs to the ketol-acid reductoisomerase family. Requires Mg(2+) as cofactor.

It carries out the reaction (2R)-2,3-dihydroxy-3-methylbutanoate + NADP(+) = (2S)-2-acetolactate + NADPH + H(+). The catalysed reaction is (2R,3R)-2,3-dihydroxy-3-methylpentanoate + NADP(+) = (S)-2-ethyl-2-hydroxy-3-oxobutanoate + NADPH + H(+). It functions in the pathway amino-acid biosynthesis; L-isoleucine biosynthesis; L-isoleucine from 2-oxobutanoate: step 2/4. It participates in amino-acid biosynthesis; L-valine biosynthesis; L-valine from pyruvate: step 2/4. Functionally, involved in the biosynthesis of branched-chain amino acids (BCAA). Catalyzes an alkyl-migration followed by a ketol-acid reduction of (S)-2-acetolactate (S2AL) to yield (R)-2,3-dihydroxy-isovalerate. In the isomerase reaction, S2AL is rearranged via a Mg-dependent methyl migration to produce 3-hydroxy-3-methyl-2-ketobutyrate (HMKB). In the reductase reaction, this 2-ketoacid undergoes a metal-dependent reduction by NADPH to yield (R)-2,3-dihydroxy-isovalerate. The polypeptide is Ketol-acid reductoisomerase (NADP(+)) (Mycobacterium leprae (strain TN)).